The chain runs to 304 residues: Oxygen-dependent coproporphyrinogen-III oxidase (304 aa).

Ser-94 serves as a coordination point for substrate. A divalent metal cation contacts are provided by His-98 and His-108. Catalysis depends on His-108, which acts as the Proton donor. Residue 110-112 coordinates substrate; sequence NVR. A divalent metal cation contacts are provided by His-147 and His-177. Residues 242–277 form an important for dimerization region; it reads YVEFNLVYDRGTLFGLQTGGRTESILMSMPPLVRWE. Position 260 to 262 (260 to 262) interacts with substrate; sequence GGR.

The protein belongs to the aerobic coproporphyrinogen-III oxidase family. Homodimer. It depends on a divalent metal cation as a cofactor.

It is found in the cytoplasm. It catalyses the reaction coproporphyrinogen III + O2 + 2 H(+) = protoporphyrinogen IX + 2 CO2 + 2 H2O. It functions in the pathway porphyrin-containing compound metabolism; protoporphyrin-IX biosynthesis; protoporphyrinogen-IX from coproporphyrinogen-III (O2 route): step 1/1. Its function is as follows. Involved in the heme biosynthesis. Catalyzes the aerobic oxidative decarboxylation of propionate groups of rings A and B of coproporphyrinogen-III to yield the vinyl groups in protoporphyrinogen-IX. The chain is Oxygen-dependent coproporphyrinogen-III oxidase from Shewanella piezotolerans (strain WP3 / JCM 13877).